Reading from the N-terminus, the 459-residue chain is MRPPSLPPARWLCVLAGALACALGPAGSRAASPHQECEYLQMIEKQRQQCLEEAQLENETTGCSKMWDNLTCWPTTPWGQVVVLDCPLIFQLFSPIHGYNISRNCTEEGWSQLEPGPYHIACGLNDRASSMDEQQQTEFYDAVKTGYTIGYSLSLASLLVAMAILSLFRKLHCTRNYIHMHLFMSFILRATAVFIKDMALFNNGETDHCSEASVSCKAAVVFFQYCVMANFFWLLVEGLYLHTLLAVSFFSERKYFWGYILIGWGVPSVFIMIWTIVRIHFEDFGCWDTIINSSLWWIIKGPILISILVNFILFICIIRILVQKLRPPDIGKNDSSPYSRLAKSTLLLIPLFGVHYVMFAFFPDNFKAQVKMVFELVVGSFQGFVVAILYCFLNGEVQAELRRKWRRWHLQGVLGWSSKSQHPWGGSNGVSCSTQVSMLTRVSPSARRSSSFQAEVSLV.

The signal sequence occupies residues 1-30 (MRPPSLPPARWLCVLAGALACALGPAGSRA). The Extracellular portion of the chain corresponds to 31–142 (ASPHQECEYL…EQQQTEFYDA (112 aa)). 5 cysteine pairs are disulfide-bonded: Cys-37-Cys-209, Cys-50-Cys-72, Cys-63-Cys-105, Cys-86-Cys-122, and Cys-216-Cys-286. Asn-58, Asn-69, Asn-100, and Asn-104 each carry an N-linked (GlcNAc...) asparagine glycan. Residues 143 to 167 (VKTGYTIGYSLSLASLLVAMAILSL) form a helical membrane-spanning segment. The Cytoplasmic segment spans residues 168–175 (FRKLHCTR). Residues 176-197 (NYIHMHLFMSFILRATAVFIKD) form a helical membrane-spanning segment. Topologically, residues 198–217 (MALFNNGETDHCSEASVSCK) are extracellular. The helical transmembrane segment at 218–242 (AAVVFFQYCVMANFFWLLVEGLYLH) threads the bilayer. Over 243–255 (TLLAVSFFSERKY) the chain is Cytoplasmic. The chain crosses the membrane as a helical span at residues 256–277 (FWGYILIGWGVPSVFIMIWTIV). Residues 278–293 (RIHFEDFGCWDTIINS) are Extracellular-facing. Asn-292 carries an N-linked (GlcNAc...) asparagine glycan. The helical transmembrane segment at 294-318 (SLWWIIKGPILISILVNFILFICII) threads the bilayer. Topologically, residues 319–340 (RILVQKLRPPDIGKNDSSPYSR) are cytoplasmic. Residues 341–361 (LAKSTLLLIPLFGVHYVMFAF) traverse the membrane as a helical segment. The Extracellular portion of the chain corresponds to 362 to 369 (FPDNFKAQ). A helical membrane pass occupies residues 370–393 (VKMVFELVVGSFQGFVVAILYCFL). Over 394–459 (NGEVQAELRR…SSFQAEVSLV (66 aa)) the chain is Cytoplasmic.

This sequence belongs to the G-protein coupled receptor 2 family. As to quaternary structure, interacts with ADCYAP1/PACAP; activated by both PACAP27 and PACAP38 neuropeptides. Interacts with VIP; the interaction results in VIPR1 activation.

Its subcellular location is the cell membrane. In terms of biological role, g protein-coupled receptor activated by the neuropeptides vasoactive intestinal peptide (VIP) and pituitary adenylate cyclase-activating polypeptide (ADCYAP1/PACAP). Binds VIP and both PACAP27 and PACAP38 bioactive peptides with the following order of ligand affinity VIP = PACAP27 &gt; PACAP38. Ligand binding causes a conformation change that triggers signaling via guanine nucleotide-binding proteins (G proteins) and modulates the activity of downstream effectors. Activates cAMP-dependent pathway. The sequence is that of Vasoactive intestinal polypeptide receptor 1 from Mus musculus (Mouse).